The following is a 252-amino-acid chain: MILHAQAKHGKPGLPWLVFLHGFSGDCHEWQEVGEAFADYSRLYVDLPGHGGSATISVDGFDDVTGLLCKTLVSYNILNFWLVGYSLGGRVAMMAACQEPAGLCGVVVEGGHPGLQNAEQRAERQRSDRQWAQRFRTEPLTAVFADWYQQPVFASLNDDQRRELVALRSNNNGATLAAMLEATSLAVQPDLRANLSARTFAFYYLCGERDSKFRALAAELAADCHVIPRAGHNAHRENPAGVIASLAQILRF.

Belongs to the AB hydrolase superfamily. MenH family. Monomer.

It carries out the reaction 5-enolpyruvoyl-6-hydroxy-2-succinyl-cyclohex-3-ene-1-carboxylate = (1R,6R)-6-hydroxy-2-succinyl-cyclohexa-2,4-diene-1-carboxylate + pyruvate. It functions in the pathway quinol/quinone metabolism; 1,4-dihydroxy-2-naphthoate biosynthesis; 1,4-dihydroxy-2-naphthoate from chorismate: step 3/7. It participates in quinol/quinone metabolism; menaquinone biosynthesis. Its function is as follows. Catalyzes a proton abstraction reaction that results in 2,5-elimination of pyruvate from 2-succinyl-5-enolpyruvyl-6-hydroxy-3-cyclohexene-1-carboxylate (SEPHCHC) and the formation of 2-succinyl-6-hydroxy-2,4-cyclohexadiene-1-carboxylate (SHCHC). The chain is 2-succinyl-6-hydroxy-2,4-cyclohexadiene-1-carboxylate synthase from Escherichia coli (strain UTI89 / UPEC).